The following is a 287-amino-acid chain: Small ribosomal subunit protein uS2 (287 aa).

Residues 235–287 (ESGFATGGGDWEATAPAAASGWDDAAAQPQNWDSAAQGAASWDEAAAPKEGQW) form a disordered region. A compositionally biased stretch (low complexity) spans 247-261 (ATAPAAASGWDDAAA).

Belongs to the universal ribosomal protein uS2 family. Component of the small ribosomal subunit. Mature ribosomes consist of a small (40S) and a large (60S) subunit. The 40S subunit contains about 33 different proteins and 1 molecule of RNA (18S). The 60S subunit contains about 49 different proteins and 3 molecules of RNA (25S, 5.8S and 5S). Interacts with RPS21.

It is found in the cytoplasm. Functionally, required for the assembly and/or stability of the 40S ribosomal subunit. Required for the processing of the 20S rRNA-precursor to mature 18S rRNA in a late step of the maturation of 40S ribosomal subunits. The protein is Small ribosomal subunit protein uS2 of Pyricularia oryzae (strain 70-15 / ATCC MYA-4617 / FGSC 8958) (Rice blast fungus).